Here is a 293-residue protein sequence, read N- to C-terminus: NAD-dependent protein deacetylase (293 aa).

The region spanning 5–282 (PAHDHHTLQD…LHAPPHLPRA (278 aa)) is the Deacetylase sirtuin-type domain. NAD(+)-binding positions include 27 to 47 (GAGCSTDSGIPDYRDLQGGWK) and 105 to 108 (QNVD). The active-site Proton acceptor is H123. 4 residues coordinate Zn(2+): C131, C134, C182, and C185. NAD(+) contacts are provided by residues 222–224 (GSS), 248–250 (NFG), and C266.

It belongs to the sirtuin family. Class II subfamily. Zn(2+) is required as a cofactor.

It localises to the cytoplasm. The enzyme catalyses N(6)-acetyl-L-lysyl-[protein] + NAD(+) + H2O = 2''-O-acetyl-ADP-D-ribose + nicotinamide + L-lysyl-[protein]. In terms of biological role, NAD-dependent protein deacetylase which modulates the activities of several enzymes which are inactive in their acetylated form. This is NAD-dependent protein deacetylase from Xanthomonas axonopodis pv. citri (strain 306).